A 75-amino-acid polypeptide reads, in one-letter code: MKLTCVVIVAVLFLTACQLATADISGGMRKHRALRSTTKLSRSPFDCSSPGAFCGLVPCCDSCNVLGRCGSGLHV.

The signal sequence occupies residues 1 to 22 (MKLTCVVIVAVLFLTACQLATA). Positions 23 to 42 (DISGGMRKHRALRSTTKLSR) are excised as a propeptide. Intrachain disulfides connect Cys47–Cys60, Cys54–Cys63, and Cys59–Cys69. Cys69 carries the cysteine amide modification. Residues 70–75 (GSGLHV) constitute a propeptide that is removed on maturation.

Belongs to the conotoxin O1 superfamily. In terms of tissue distribution, expressed by the venom duct.

The protein localises to the secreted. The polypeptide is Conotoxin Leo-O3 (Conus leopardus (Leopard cone)).